The following is a 282-amino-acid chain: 2-dehydro-3-deoxyphosphooctonate aldolase (282 aa).

Belongs to the KdsA family.

It localises to the cytoplasm. The enzyme catalyses D-arabinose 5-phosphate + phosphoenolpyruvate + H2O = 3-deoxy-alpha-D-manno-2-octulosonate-8-phosphate + phosphate. Its pathway is carbohydrate biosynthesis; 3-deoxy-D-manno-octulosonate biosynthesis; 3-deoxy-D-manno-octulosonate from D-ribulose 5-phosphate: step 2/3. It functions in the pathway bacterial outer membrane biogenesis; lipopolysaccharide biosynthesis. This Chromobacterium violaceum (strain ATCC 12472 / DSM 30191 / JCM 1249 / CCUG 213 / NBRC 12614 / NCIMB 9131 / NCTC 9757 / MK) protein is 2-dehydro-3-deoxyphosphooctonate aldolase.